A 206-amino-acid polypeptide reads, in one-letter code: Outer-membrane lipoprotein carrier protein (206 aa).

An N-terminal signal peptide occupies residues 1 to 21; sequence MKKLLCAVLLSPLLYSNAVLA.

Belongs to the LolA family. In terms of assembly, monomer.

The protein resides in the periplasm. In terms of biological role, participates in the translocation of lipoproteins from the inner membrane to the outer membrane. Only forms a complex with a lipoprotein if the residue after the N-terminal Cys is not an aspartate (The Asp acts as a targeting signal to indicate that the lipoprotein should stay in the inner membrane). In Shewanella sp. (strain ANA-3), this protein is Outer-membrane lipoprotein carrier protein.